The primary structure comprises 142 residues: Hemoglobin subunit alpha (142 aa).

S1 bears the N-acetylserine mark. In terms of domain architecture, Globin spans 1-142 (SLSDKDKAAV…LSLALAEKYR (142 aa)). Positions 59 and 88 each coordinate heme b.

The protein belongs to the globin family. In terms of assembly, heterotetramer of two alpha chains and two beta chains. As to expression, red blood cells.

Functionally, involved in oxygen transport from gills to the various peripheral tissues. The sequence is that of Hemoglobin subunit alpha from Lycodes reticulatus (Arctic eelpout).